A 317-amino-acid chain; its full sequence is Cytochrome f (317 aa).

An N-terminal signal peptide occupies residues 1-34 (MKGLKNQIMKKTSLFICTLLFISSIVFHPKITFA). Tyr35, Cys55, Cys58, and His59 together coordinate heme. The chain crosses the membrane as a helical span at residues 284-304 (VIGLIAFFIGVGLTQILLVLK).

This sequence belongs to the cytochrome f family. The 4 large subunits of the cytochrome b6-f complex are cytochrome b6, subunit IV (17 kDa polypeptide, PetD), cytochrome f and the Rieske protein, while the 4 small subunits are PetG, PetL, PetM and PetN. The complex functions as a dimer. Heme is required as a cofactor.

The protein localises to the cellular thylakoid membrane. Component of the cytochrome b6-f complex, which mediates electron transfer between photosystem II (PSII) and photosystem I (PSI), cyclic electron flow around PSI, and state transitions. This chain is Cytochrome f, found in Prochlorococcus marinus (strain MIT 9301).